The primary structure comprises 433 residues: Homoserine O-acetyltransferase (433 aa).

An AB hydrolase-1 domain is found at 41–385; it reads NVVLVCHALT…HGHDAFLVEP (345 aa). The disordered stretch occupies residues 55 to 74; the sequence is VARSPAPERNEGTRGAGQAG. Ser-166 serves as the catalytic Nucleophile. Position 237 (Arg-237) interacts with substrate. Active-site residues include Asp-345 and His-378. Asp-379 is a substrate binding site. Positions 403-433 are disordered; that stretch reads RAVSDDGGGGGNDSARPERDHAPVHASLFKG.

Belongs to the AB hydrolase superfamily. MetX family. Homodimer.

Its subcellular location is the cytoplasm. The enzyme catalyses L-homoserine + acetyl-CoA = O-acetyl-L-homoserine + CoA. It participates in amino-acid biosynthesis; L-methionine biosynthesis via de novo pathway; O-acetyl-L-homoserine from L-homoserine: step 1/1. Its function is as follows. Transfers an acetyl group from acetyl-CoA to L-homoserine, forming acetyl-L-homoserine. In Halorubrum lacusprofundi (strain ATCC 49239 / DSM 5036 / JCM 8891 / ACAM 34), this protein is Homoserine O-acetyltransferase.